The chain runs to 299 residues: NAD kinase (299 aa).

The active-site Proton acceptor is Asp64. Residues 64-65 (DG), 138-139 (ND), Arg149, Arg166, Asp168, 179-184 (TGYAVS), and Gln238 contribute to the NAD(+) site.

The protein belongs to the NAD kinase family. A divalent metal cation is required as a cofactor.

It localises to the cytoplasm. The catalysed reaction is NAD(+) + ATP = ADP + NADP(+) + H(+). Functionally, involved in the regulation of the intracellular balance of NAD and NADP, and is a key enzyme in the biosynthesis of NADP. Catalyzes specifically the phosphorylation on 2'-hydroxyl of the adenosine moiety of NAD to yield NADP. The chain is NAD kinase from Nitratidesulfovibrio vulgaris (strain ATCC 29579 / DSM 644 / CCUG 34227 / NCIMB 8303 / VKM B-1760 / Hildenborough) (Desulfovibrio vulgaris).